We begin with the raw amino-acid sequence, 96 residues long: Co-chaperonin GroES (96 aa).

This sequence belongs to the GroES chaperonin family. In terms of assembly, heptamer of 7 subunits arranged in a ring. Interacts with the chaperonin GroEL.

The protein resides in the cytoplasm. In terms of biological role, together with the chaperonin GroEL, plays an essential role in assisting protein folding. The GroEL-GroES system forms a nano-cage that allows encapsulation of the non-native substrate proteins and provides a physical environment optimized to promote and accelerate protein folding. GroES binds to the apical surface of the GroEL ring, thereby capping the opening of the GroEL channel. This chain is Co-chaperonin GroES, found in Holospora obtusa.